A 256-amino-acid chain; its full sequence is Protein LIKE COV 1 (256 aa).

Residues 1–10 (MANRERDREL) show a composition bias toward basic and acidic residues. Residues 1 to 39 (MANRERDRELLIPVADFGDKDDGSSSKPSSSSSASSSHQ) are disordered. Over 1–60 (MANRERDRELLIPVADFGDKDDGSSSKPSSSSSASSSHQSGHETLSLFIRGWASKKFMTG) the chain is Cytoplasmic. Low complexity predominate over residues 25–39 (SSKPSSSSSASSSHQ). Residues 61-81 (CVILLPIAVTFYTTWWFIHFV) traverse the membrane as a helical segment. Residues 82-93 (DGFFSPIYALLG) are Extracellular-facing. The chain crosses the membrane as a helical span at residues 94–114 (INIFGFGFLTSIAFIFLVGVF). Over 115–256 (MSSWLGASVL…KPLASIGNES (142 aa)) the chain is Cytoplasmic.

This sequence belongs to the plant COV1 protein family. Expressed at low levels in flowers, stems, roots and leaves.

The protein localises to the membrane. The polypeptide is Protein LIKE COV 1 (Arabidopsis thaliana (Mouse-ear cress)).